Here is a 206-residue protein sequence, read N- to C-terminus: MNEWQQRVIALAGMSLSAMAVQKLARSGELYPESISNTLVHSLLQQNPDNIEDIYGGLDNIKPGIQAFIRQAGSNKNKDIEVTRYLIGLIHLSRRLLKQPDILNLLGERITQVKRQKEEFEFENYRIQQSLAGIYRELISPLGQPIRINGNPEFLKRDSNQHHIRTLLLAGIRSAVLWQQVGGKRRHFVFSRKKMLDTAQQLLHVA.

Belongs to the HflD family.

Its subcellular location is the cytoplasm. It localises to the cell inner membrane. The protein is High frequency lysogenization protein HflD homolog of Idiomarina loihiensis (strain ATCC BAA-735 / DSM 15497 / L2-TR).